The following is an 805-amino-acid chain: Kinesin-like protein Klp10A (805 aa).

Positions 1–274 (MDMITVGQSV…FVPLLDGQAV (274 aa)) are globular. 2 disordered regions span residues 68 to 94 (QHAA…SAIG) and 117 to 211 (IPNP…RRSH). Over residues 80-94 (APMNLSRNPTQSAIG) the composition is skewed to polar residues. Over residues 123–136 (SSNSVNTNSNSNTT) the composition is skewed to low complexity. The residue at position 157 (Ser157) is a Phosphoserine. Residues 158–179 (QAATGQQQTRIASAVPNNTLPN) are compositionally biased toward polar residues. Low complexity predominate over residues 180 to 200 (PSAAASAGPAAQGVATAATTQ). The stretch at 205 to 244 (ASTRRSHALKEVERLKENREKRRARQAEMKEEKVALMNQD) forms a coiled coil. Residues 278–610 (QITVCVRKRP…LRYADRVKEL (333 aa)) enclose the Kinesin motor domain. Residue 368 to 375 (GQTGSGKT) coordinates ATP. Phosphothreonine is present on Thr630. The interval 633-688 (EEEEELNMVHPHSHQLHPNSHAPASQSNNQRAPASHHSGAVIHNNNNNNNKNGNAG) is disordered. Polar residues predominate over residues 648-664 (LHPNSHAPASQSNNQRA). Residues 676–688 (NNNNNNNKNGNAG) show a composition bias toward low complexity. Ser795, Ser797, and Ser800 each carry phosphoserine.

The protein belongs to the TRAFAC class myosin-kinesin ATPase superfamily. Kinesin family. MCAK/KIF2 subfamily. As to quaternary structure, interacts with Alms1a (via C-terminus). In terms of tissue distribution, expressed in male germline stem cells and spermatogonia (at protein level).

The protein localises to the cytoplasm. It is found in the cytoskeleton. It localises to the microtubule organizing center. Its subcellular location is the centrosome. The protein resides in the spindle pole. The protein localises to the chromosome. It is found in the centromere. Functionally, required during anaphase to drive sister chromatid separation to promote flux by actively depolymerizing kinetochore microtubules at their pole-associated minus ends, thereby moving chromatids through a 'poleward flux'. Involved in asymmetric cell division of sensory organ precursor (SOP) cells by playing a role in the asymmetric localization of Sara-expressing endosomes to the pIIa daughter cell but not to the pIIb cell. Klp98A targets Sara-expressing endosomes to the central spindle which is symmetrically arranged in early cell division. During late cytokinesis, central spindle asymmetry is generated by enrichment of Patronin on the pIIb side which protects microtubules from depolymerization by Klp10A while unprotected microtubules on the pIIa side are disassembled by Klp10A, leading to the asymmetric delivery of Sara-expressing endosomes to the pIIa daughter cell. In Drosophila melanogaster (Fruit fly), this protein is Kinesin-like protein Klp10A.